Here is a 284-residue protein sequence, read N- to C-terminus: Nucleoid occlusion protein (284 aa).

A DNA-binding region (H-T-H motif) is located at residues 143–162 (EALAQRVGKSQSAIANKMRL).

It belongs to the ParB family.

The protein resides in the cytoplasm. Its subcellular location is the nucleoid. Effects nucleoid occlusion by binding relatively nonspecifically to DNA and preventing the assembly of the division machinery in the vicinity of the nucleoid, especially under conditions that disturb the cell cycle. It helps to coordinate cell division and chromosome segregation by preventing the formation of the Z ring through the nucleoid, which would cause chromosome breakage. In Listeria monocytogenes serovar 1/2a (strain ATCC BAA-679 / EGD-e), this protein is Nucleoid occlusion protein.